We begin with the raw amino-acid sequence, 108 residues long: uncharacterized protein (108 aa).

Residues 1-16 (MKKLILIAIMASGLVA) form the signal peptide. A lipid anchor (N-palmitoyl cysteine) is attached at cysteine 17. A lipid anchor (S-diacylglycerol cysteine) is attached at cysteine 17.

It is found in the cell membrane. This is an uncharacterized protein from Escherichia coli (strain K12).